The sequence spans 394 residues: Protein maelstrom (394 aa).

Positions 2-69 (APKKQNGFMM…ARRDKRGSLN (68 aa)) form a DNA-binding region, HMG box. Positions 44 to 93 (TQQRGPYNSDAKDANAARRDKRGSLNGHGQVDKAQREAAESLMDKAQREA) are disordered. The segment covering 73-93 (QVDKAQREAAESLMDKAQREA) has biased composition (basic and acidic residues).

Belongs to the maelstrom family.

It is found in the cytoplasm. Its subcellular location is the nucleus. Its function is as follows. Involved both in the piRNA and miRNA metabolic processes. As a component of the meiotic nuage, plays a central role during oogenesis by repressing transposable elements and preventing their mobilization, which is essential for the germline integrity. Repression of transposable elements is mediated via the piRNA metabolic process, which mediates the repression of transposable elements during meiosis by forming complexes composed of piRNAs and Piwi proteins and governs the repression of transposons. As a nuclear component, it is required for proper differentiation in the germline stem cell (GSC) lineage by repressing microRNA-7 (miR-7), thereby acting as an indirect regulator of bag-of-marbles (Bam). Acts by binding to the promoter of miR-7 gene and repressing its expression; miR-7 repression alleviates the Bam repression by miR-7, thereby allowing differentiation in the germline stem cell (GSC) lineage. In Drosophila sechellia (Fruit fly), this protein is Protein maelstrom (mael).